The primary structure comprises 392 residues: Tryptophan synthase beta chain (392 aa).

N6-(pyridoxal phosphate)lysine is present on Lys86.

It belongs to the TrpB family. As to quaternary structure, tetramer of two alpha and two beta chains. It depends on pyridoxal 5'-phosphate as a cofactor.

It carries out the reaction (1S,2R)-1-C-(indol-3-yl)glycerol 3-phosphate + L-serine = D-glyceraldehyde 3-phosphate + L-tryptophan + H2O. The protein operates within amino-acid biosynthesis; L-tryptophan biosynthesis; L-tryptophan from chorismate: step 5/5. Its function is as follows. The beta subunit is responsible for the synthesis of L-tryptophan from indole and L-serine. In Methanocorpusculum labreanum (strain ATCC 43576 / DSM 4855 / Z), this protein is Tryptophan synthase beta chain.